We begin with the raw amino-acid sequence, 521 residues long: Membrane-bound transcription factor site-2 protease (521 aa).

Over 1–3 (MIP) the chain is Cytoplasmic. The helical transmembrane segment at 4–24 (VSLVVVVVGGWTVVYLTDLVL) threads the bilayer. The Lumenal segment spans residues 25 to 74 (KSSVYFKHSYEDWLESNGLSISPFHIRWQTAVFNRAFYSWGRRKARMLYQ). 2 helical membrane passes run 75–95 (WFNF…FLLG) and 96–107 (KTLMQTLAQMMA). At 108–146 (DSPSSYSSSSSSSSSSSSSSSSSSSSSSSSSLHNEQVLQ) the chain is on the lumenal side. A disordered region spans residues 113–137 (YSSSSSSSSSSSSSSSSSSSSSSSS). The helical transmembrane segment at 147–171 (VVVPGINLPVNQLTYFFAAVLISGV) threads the bilayer. His173 is a Zn(2+) binding site. Glu174 is an active-site residue. Helical transmembrane passes span 176–188 (GHGI…QVRF), 189–211 (NGFG…TTHL), and 231–253 (FVLA…PFYY). Residue His177 participates in Zn(2+) binding. Over 254–448 (TGVGVLITEV…LPVVVETFVK (195 aa)) the chain is Lumenal. An N-linked (GlcNAc...) asparagine glycan is attached at Asn339. The next 2 helical transmembrane spans lie at 449–466 (YLIS…VPCF) and 467–478 (ALDGQWILNSFL). Residues 479–494 (DATLTSVIGDNDVKDL) are Lumenal-facing. Residues 495–515 (IGFFILLGGSVLLAANVTLGL) form a helical membrane-spanning segment. Topologically, residues 516-521 (WMVTAR) are cytoplasmic.

This sequence belongs to the peptidase M50A family. Zn(2+) is required as a cofactor.

It localises to the membrane. The protein resides in the cytoplasm. It is found in the golgi apparatus membrane. The catalysed reaction is Cleaves several transcription factors that are type-2 transmembrane proteins within membrane-spanning domains. Known substrates include sterol regulatory element-binding protein (SREBP) -1, SREBP-2 and forms of the transcriptional activator ATF6. SREBP-2 is cleaved at the site 477-DRSRILL-|-CVLTFLCLSFNPLTSLLQWGGA-505. The residues Asn-Pro, 11 residues distal to the site of cleavage in the membrane-spanning domain, are important for cleavage by S2P endopeptidase. Replacement of either of these residues does not prevent cleavage, but there is no cleavage if both of these residues are replaced.. In terms of biological role, zinc metalloprotease that mediates intramembrane proteolysis of proteins such as ATF6, ATF6B, SREBF1/SREBP1 and SREBF2/SREBP2. Catalyzes the second step in the proteolytic activation of the sterol regulatory element-binding proteins (SREBPs) SREBF1/SREBP1 and SREBF2/SREBP2: cleaves SREBPs within the first transmembrane segment, thereby releasing the N-terminal segment with a portion of the transmembrane segment attached. Mature N-terminal SREBP fragments shuttle to the nucleus and activate gene transcription. Also mediates the second step in the proteolytic activation of the cyclic AMP-dependent transcription factor ATF-6 (ATF6 and ATF6B). Involved in intramembrane proteolysis during bone formation. In astrocytes and osteoblasts, upon DNA damage and ER stress, mediates the second step of the regulated intramembrane proteolytic activation of the transcription factor CREB3L1, leading to the inhibition of cell-cycle progression. The polypeptide is Membrane-bound transcription factor site-2 protease (MBTPS2) (Pongo abelii (Sumatran orangutan)).